A 549-amino-acid chain; its full sequence is CTP synthase (549 aa).

The amidoligase domain stretch occupies residues 1 to 267; sequence MAKFVFITGG…CREVLDVLQL (267 aa). Residue Ser-13 coordinates CTP. Ser-13 contacts UTP. Residues 14 to 19 and Asp-71 contribute to the ATP site; that span reads SIGKGI. Residues Asp-71 and Glu-141 each contribute to the Mg(2+) site. Residues 148–150, 188–193, and Lys-224 contribute to the CTP site; these read DIE and KTKPTQ. UTP contacts are provided by residues 188–193 and Lys-224; that span reads KTKPTQ. The region spanning 292 to 534 is the Glutamine amidotransferase type-1 domain; the sequence is KVALVGKYVQ…IEAAQQRLPD (243 aa). Position 354 (Gly-354) interacts with L-glutamine. Catalysis depends on Cys-381, which acts as the Nucleophile; for glutamine hydrolysis. L-glutamine contacts are provided by residues 382–385, Glu-405, and Arg-462; that span reads LGMQ. Active-site residues include His-507 and Glu-509.

The protein belongs to the CTP synthase family. Homotetramer.

The enzyme catalyses UTP + L-glutamine + ATP + H2O = CTP + L-glutamate + ADP + phosphate + 2 H(+). It catalyses the reaction L-glutamine + H2O = L-glutamate + NH4(+). It carries out the reaction UTP + NH4(+) + ATP = CTP + ADP + phosphate + 2 H(+). Its pathway is pyrimidine metabolism; CTP biosynthesis via de novo pathway; CTP from UDP: step 2/2. Allosterically activated by GTP, when glutamine is the substrate; GTP has no effect on the reaction when ammonia is the substrate. The allosteric effector GTP functions by stabilizing the protein conformation that binds the tetrahedral intermediate(s) formed during glutamine hydrolysis. Inhibited by the product CTP, via allosteric rather than competitive inhibition. Catalyzes the ATP-dependent amination of UTP to CTP with either L-glutamine or ammonia as the source of nitrogen. Regulates intracellular CTP levels through interactions with the four ribonucleotide triphosphates. This chain is CTP synthase, found in Synechococcus sp. (strain CC9902).